Here is a 419-residue protein sequence, read N- to C-terminus: MDKFRVQGPTRLQGEVTISGAKNAALPILFSALLAEEPVEIQNVPKLKDIDTTMKLLSQLGAKVERNGSVWIDAGPVDVFCAPYDLVKTMRASIWALGPLVARFGQGQVSLPGGCAIGARPVDLHISGLEQLGAEIKLEEGYVKASVNGRLKGAHIVMDKVSVGATVTIMSAATLAEGTTIIENAAREPEIVDTANFLNALGAKIKGQGTDRITIEGVQRLGGGVYRVLPDRIETGTFLVAAAISGGKILCRNAQPDTLDAVLAKLRDAGADIETGEDWISLDMHGNRPKAVNVRTAPHPGFPTDMQAQFTLLNLVAEGTGVITETIFENRFMHIPELIRMGAHAEIESNTAICHGVKQLSGAQVMATDLRASASLVLAGCIAEGTTIVDRIYHIDRGYERIEDKLQALGANIQRVKGE.

22–23 (KN) contacts phosphoenolpyruvate. Arginine 91 provides a ligand contact to UDP-N-acetyl-alpha-D-glucosamine. Cysteine 115 serves as the catalytic Proton donor. Cysteine 115 is subject to 2-(S-cysteinyl)pyruvic acid O-phosphothioketal. UDP-N-acetyl-alpha-D-glucosamine contacts are provided by residues 120–124 (RPVDL), 160–163 (KVSV), aspartate 305, and isoleucine 327.

It belongs to the EPSP synthase family. MurA subfamily.

It is found in the cytoplasm. It catalyses the reaction phosphoenolpyruvate + UDP-N-acetyl-alpha-D-glucosamine = UDP-N-acetyl-3-O-(1-carboxyvinyl)-alpha-D-glucosamine + phosphate. It functions in the pathway cell wall biogenesis; peptidoglycan biosynthesis. Functionally, cell wall formation. Adds enolpyruvyl to UDP-N-acetylglucosamine. This chain is UDP-N-acetylglucosamine 1-carboxyvinyltransferase, found in Klebsiella pneumoniae (strain 342).